Reading from the N-terminus, the 662-residue chain is UvrABC system protein B (662 aa).

One can recognise a Helicase ATP-binding domain in the interval 25 to 414 (TGLNSKKRSQ…GTVVELIIRP (390 aa)). An ATP-binding site is contributed by 38–45 (GITGSGKT). The Beta-hairpin signature appears at 91–114 (YYDYYQPESYIVRTDTFIEKDSSI). In terms of domain architecture, Helicase C-terminal spans 430–592 (QVEDLISEIQ…IIPKTINRAI (163 aa)). The UVR domain maps to 622–657 (KAHMDKLKKEMFKAASNLEFEQAAKLRNQLKALEEA).

Belongs to the UvrB family. Forms a heterotetramer with UvrA during the search for lesions. Interacts with UvrC in an incision complex.

The protein localises to the cytoplasm. In terms of biological role, the UvrABC repair system catalyzes the recognition and processing of DNA lesions. A damage recognition complex composed of 2 UvrA and 2 UvrB subunits scans DNA for abnormalities. Upon binding of the UvrA(2)B(2) complex to a putative damaged site, the DNA wraps around one UvrB monomer. DNA wrap is dependent on ATP binding by UvrB and probably causes local melting of the DNA helix, facilitating insertion of UvrB beta-hairpin between the DNA strands. Then UvrB probes one DNA strand for the presence of a lesion. If a lesion is found the UvrA subunits dissociate and the UvrB-DNA preincision complex is formed. This complex is subsequently bound by UvrC and the second UvrB is released. If no lesion is found, the DNA wraps around the other UvrB subunit that will check the other stand for damage. This Rickettsia prowazekii (strain Madrid E) protein is UvrABC system protein B.